A 373-amino-acid polypeptide reads, in one-letter code: 3-dehydroquinate synthase (373 aa).

NAD(+)-binding positions include 120–124 (GVVGD), 144–145 (TT), Lys-157, Lys-166, and 184–187 (FLKT). The Zn(2+) site is built by Glu-199, His-262, and His-278.

This sequence belongs to the sugar phosphate cyclases superfamily. Dehydroquinate synthase family. The cofactor is NAD(+). Requires Co(2+) as cofactor. It depends on Zn(2+) as a cofactor.

It localises to the cytoplasm. It carries out the reaction 7-phospho-2-dehydro-3-deoxy-D-arabino-heptonate = 3-dehydroquinate + phosphate. It functions in the pathway metabolic intermediate biosynthesis; chorismate biosynthesis; chorismate from D-erythrose 4-phosphate and phosphoenolpyruvate: step 2/7. Catalyzes the conversion of 3-deoxy-D-arabino-heptulosonate 7-phosphate (DAHP) to dehydroquinate (DHQ). The chain is 3-dehydroquinate synthase from Clostridium tetani (strain Massachusetts / E88).